Reading from the N-terminus, the 209-residue chain is Large ribosomal subunit protein uL3 (209 aa).

Residues 127-164 are disordered; the sequence is NFSGGQRTHGQSDRLRAPGSVGGASDPSRTFKGTKMGG.

This sequence belongs to the universal ribosomal protein uL3 family. Part of the 50S ribosomal subunit. Forms a cluster with proteins L14 and L19.

One of the primary rRNA binding proteins, it binds directly near the 3'-end of the 23S rRNA, where it nucleates assembly of the 50S subunit. The chain is Large ribosomal subunit protein uL3 from Chlorobium phaeobacteroides (strain BS1).